Reading from the N-terminus, the 508-residue chain is Light-independent protochlorophyllide reductase subunit B (508 aa).

Residue D36 participates in [4Fe-4S] cluster binding. D294 serves as the catalytic Proton donor. 429–430 (GM) contributes to the substrate binding site.

It belongs to the ChlB/BchB/BchZ family. In terms of assembly, protochlorophyllide reductase is composed of three subunits; ChlL, ChlN and ChlB. Forms a heterotetramer of two ChlB and two ChlN subunits. [4Fe-4S] cluster serves as cofactor.

The enzyme catalyses chlorophyllide a + oxidized 2[4Fe-4S]-[ferredoxin] + 2 ADP + 2 phosphate = protochlorophyllide a + reduced 2[4Fe-4S]-[ferredoxin] + 2 ATP + 2 H2O. It functions in the pathway porphyrin-containing compound metabolism; chlorophyll biosynthesis (light-independent). In terms of biological role, component of the dark-operative protochlorophyllide reductase (DPOR) that uses Mg-ATP and reduced ferredoxin to reduce ring D of protochlorophyllide (Pchlide) to form chlorophyllide a (Chlide). This reaction is light-independent. The NB-protein (ChlN-ChlB) is the catalytic component of the complex. This is Light-independent protochlorophyllide reductase subunit B from Rippkaea orientalis (strain PCC 8801 / RF-1) (Cyanothece sp. (strain PCC 8801)).